Consider the following 741-residue polypeptide: Catalase-peroxidase (741 aa).

A signal peptide spans 1–23 (MLKKIVTALGMSGMLLASSNAIA). Positions 102–223 (WHDAGTYRIY…YAATQMGLIY (122 aa)) form a cross-link, tryptophyl-tyrosyl-methioninium (Trp-Tyr) (with M-249). The active-site Proton acceptor is His-103. A cross-link (tryptophyl-tyrosyl-methioninium (Tyr-Met) (with W-102)) is located at residues 223–249 (YVNPEGPDGKPDIKGAASEIRQAFRAM). Residue His-264 participates in heme b binding.

Belongs to the peroxidase family. Peroxidase/catalase subfamily. Homodimer or homotetramer. It depends on heme b as a cofactor. In terms of processing, formation of the three residue Trp-Tyr-Met cross-link is important for the catalase, but not the peroxidase activity of the enzyme.

The catalysed reaction is H2O2 + AH2 = A + 2 H2O. It carries out the reaction 2 H2O2 = O2 + 2 H2O. Functionally, bifunctional enzyme with both catalase and broad-spectrum peroxidase activity. The sequence is that of Catalase-peroxidase from Francisella tularensis subsp. tularensis (strain WY96-3418).